We begin with the raw amino-acid sequence, 1258 residues long: uncharacterized protein (1258 aa).

Residues 55–93 (ELASEILGVCWQENGVLAAGISEGTWKRFLAGKQAINAE) form a WD 1 repeat. The span at 112-128 (GGRTKERKDTGTSRQEK) shows a compositional bias: basic and acidic residues. Positions 112 to 138 (GGRTKERKDTGTSRQEKFLSSSHPHTD) are disordered. 14 WD repeats span residues 640–679 (ETLGNILSAAFSPEGQLLATCDTDCHVRVWEVKSGKLLLI), 682–721 (GHSNWVRFVVFSPDGEILASCGADENVKLWSVRDGVCIKT), 724–763 (GHEHEVFSVAFHPDGETLASASGDKTIKLWDIQDGTCLQT), 766–807 (GHTD…RTLK), 809–849 (HTGW…KTYI), 850–889 (GHTNSVYSIAYSPDSKILVSGSGDRTIKLWDCQTHICIKT), 892–931 (GHTNEVCSVAFSPDGQTLACVSLDQSVRLWNCRTGQCLKA), 934–975 (GNTD…SSLE), 976–1017 (GHTD…QILL), 1019–1059 (HTDW…KTLS), 1060–1101 (EHSD…GILR), 1103–1143 (HSNR…KTLT), 1144–1183 (GHTNWVFDIAFSPDGKILASASHDQTVRIWDVNTGKCHHI), and 1186–1227 (GHTH…QILR).

This is an uncharacterized protein from Nostoc sp. (strain PCC 7120 / SAG 25.82 / UTEX 2576).